A 258-amino-acid chain; its full sequence is Imidazole glycerol phosphate synthase subunit HisF (258 aa).

Residues D11 and D130 contribute to the active site.

The protein belongs to the HisA/HisF family. As to quaternary structure, heterodimer of HisH and HisF.

The protein localises to the cytoplasm. It carries out the reaction 5-[(5-phospho-1-deoxy-D-ribulos-1-ylimino)methylamino]-1-(5-phospho-beta-D-ribosyl)imidazole-4-carboxamide + L-glutamine = D-erythro-1-(imidazol-4-yl)glycerol 3-phosphate + 5-amino-1-(5-phospho-beta-D-ribosyl)imidazole-4-carboxamide + L-glutamate + H(+). The protein operates within amino-acid biosynthesis; L-histidine biosynthesis; L-histidine from 5-phospho-alpha-D-ribose 1-diphosphate: step 5/9. Functionally, IGPS catalyzes the conversion of PRFAR and glutamine to IGP, AICAR and glutamate. The HisF subunit catalyzes the cyclization activity that produces IGP and AICAR from PRFAR using the ammonia provided by the HisH subunit. This Shigella flexneri serotype 5b (strain 8401) protein is Imidazole glycerol phosphate synthase subunit HisF.